The primary structure comprises 540 residues: MKCAHFIDGPHCVKACPAGVLGENDTLVWKYADANAVCQLCHPNCTRGCKGPGLEGCPNGSKTPSIAAGVVGGLLCLVVVGLGIGLYLRRRHIVRKRTLRRLLQERELVEPLTPSGEAPNQAHLRILKETEFKKVKVLGFGAFGTVYKGLWIPEGEKVTIPVAIKELREATSPKANKEILDEAYVMASVDNPHVCRLLGICLTSTVQLITQLMPYGCLLDYIREHKDNIGSQYLLNWCVQIAKGMNYLEERHMVHRDLAARNVLVKTPQHVKITDFGLAKQLGADEKEYHAEGGKVPIKWMALESILHRIYTHQSDVWSYGVTVWELMTFGSKPYDGIPASEISSVLEKGERLPQPPICTIDVYMIMVKCWMSDADSRPKFRELIAEFSKMARDPPRYLVIQGDERMHLPSPTDSKFYRTLMEEEDMEDIVDADEYLVPHQGFFNSPSTSRTPLLSSLSATSNNSATNCIDRNGGHPVREDGFLPAPEYVNQLMPKKPSTAMVQNQIYNYISLTAISKLPIDSRYQNSHSTAVDNPEYLE.

One can recognise a Protein kinase domain in the interval 132–399; that stretch reads FKKVKVLGFG…KMARDPPRYL (268 aa). ATP is bound by residues 138 to 146 and Lys165; that span reads LGFGAFGTV. Asp257 functions as the Proton acceptor in the catalytic mechanism.

It belongs to the protein kinase superfamily. Tyr protein kinase family. EGF receptor subfamily.

The enzyme catalyses L-tyrosyl-[protein] + ATP = O-phospho-L-tyrosyl-[protein] + ADP + H(+). This is Tyrosine-protein kinase transforming protein erbB (V-ERBB) from Avian erythroblastosis virus (strain ts167).